A 639-amino-acid chain; its full sequence is 3-hydroxybenzoate 4-monooxygenase (639 aa).

FAD contacts are provided by residues 34-64 (DVLI…IVEQ), glutamine 73, valine 166, asparagine 212, 269-271 (RFY), tyrosine 317, aspartate 349, and serine 365.

Belongs to the PheA/TfdB FAD monooxygenase family. In terms of assembly, homodimer. FAD serves as cofactor.

The enzyme catalyses 3-hydroxybenzoate + NADPH + O2 + H(+) = 3,4-dihydroxybenzoate + NADP(+) + H2O. Converts 3-hydroxybenzoate (m-hydroxybenzoate), and to a lesser extent p-hydroxybenzoate, to 3,4-dihydroxybenzoate (protocatechuate). Also acts on a number of analogs of 3-hydroxybenzoate substituted in the 2, 4, 5 and 6 positions. This is 3-hydroxybenzoate 4-monooxygenase (mobA) from Comamonas testosteroni (Pseudomonas testosteroni).